The following is a 445-amino-acid chain: MDSIILKNHQKKPIEFMKNNRGVILYHSTGAGKTLTAIYSVYQFDYPIIIIGPKSSKKAFTDNIEKAGMDISRFTFYTYTKIKMILESDITIFKNMSVIVDEAHSLRNENMYNLYISSALMLASKIILLTATPVVNYFNDLAVLVNIVRGEDSLPTERALFDQMFYDEETMTLINAPILFNKLLNTISYYKIIDTINYPTSESHIKQVEMDHLQIDEYKYYIKQILYSNENVPDNVDIFNINYGLLPSKKRNFFLNVTRQLSNVAKIADTSPKIEDIMKYIISGPYPIVIYSNFLKSGIYTLAVRLEKENISYKIISGFVSQDKLNMIVNNYNNGLFKVLLISSAGSESLDLKNTHQVHIMEPHWNESKIIQVIGRSIRYGSHISLPQNERKVDIYRWISIFPNQYRNISADEYLTTLSQRKMELWNKYNQIVIDASIENNYFAK.

The region spanning 14 to 151 (IEFMKNNRGV…AVLVNIVRGE (138 aa)) is the Helicase ATP-binding domain. Residue 27–34 (HSTGAGKT) coordinates ATP. A DEAH box motif is present at residues 101–104 (DEAH). The region spanning 273 to 442 (KIEDIMKYII…VIDASIENNY (170 aa)) is the Helicase C-terminal domain.

Belongs to the DEAD box helicase family. DEAH subfamily.

It is found in the virion. It catalyses the reaction ATP + H2O = ADP + phosphate + H(+). This is Putative ATP-dependent RNA helicase L538 from Acanthamoeba polyphaga mimivirus (APMV).